The primary structure comprises 418 residues: MIHSLFLINCSGDIFLEKHWKSVVSQSVCDYFFEAQEKAADVENVPPVISTPHHYLISIYRDKLFFVSVIQTEVPPLFVIEFLHRVADTFQDYFGECSEAAIKDNVVIVYELLEEMLDNGFPLATESNILKELIKPPTILRSGVNSITGSSNVGDTLPTGQLSNIPWRRAGVKYTNNEAYFDVVEEIDAIIDKSGSTVFAEIQGVIDACIKLSGMPDLSLSFMNPRLLDDVSFHPCIRFKRWESERVLSFIPPDGNFRLISYRVSSQNLVAIPVYVKHSISFKENSSCGRFDITIGPKQNMGKTIEGITVTVHMPKVVLNMNLTPTQGSYTFDPVTKVLTWDVGKITPQKLPSLKGLVNLQSGAPKPEENPSLNIQFKIQQLAISGLKVNRLDMYGEKYKPFKGVKYVTKAGKFQVRT.

The region spanning 176–417 (NNEAYFDVVE…VTKAGKFQVR (242 aa)) is the MHD domain.

The protein belongs to the adaptor complexes medium subunit family. As to quaternary structure, adaptor protein complex 3 (AP-3) is a heterotetramer composed of two large adaptins (delta-type subunit AP3D1 and beta-type subunit AP3B1 or AP3B2), a medium adaptin (mu-type subunit AP3M1 or AP3M2) and a small adaptin (sigma-type subunit APS1 or AP3S2). Interacts with AGAP1. AP-3 associates with the BLOC-1 complex.

The protein localises to the golgi apparatus. It localises to the cytoplasmic vesicle membrane. Part of the AP-3 complex, an adaptor-related complex which is not clathrin-associated. The complex is associated with the Golgi region as well as more peripheral structures. It facilitates the budding of vesicles from the Golgi membrane and may be directly involved in trafficking to lysosomes. In concert with the BLOC-1 complex, AP-3 is required to target cargos into vesicles assembled at cell bodies for delivery into neurites and nerve terminals. The sequence is that of AP-3 complex subunit mu-1 (AP3M1) from Bos taurus (Bovine).